The chain runs to 362 residues: Probable dual-specificity RNA methyltransferase RlmN (362 aa).

The active-site Proton acceptor is the Glu-105. One can recognise a Radical SAM core domain in the interval 111 to 344; the sequence is HEYGNSICVT…VTIRREQGHD (234 aa). Residues Cys-118 and Cys-349 are joined by a disulfide bond. 3 residues coordinate [4Fe-4S] cluster: Cys-125, Cys-129, and Cys-132. Residues 175–176, Ser-207, 230–232, and Asn-306 contribute to the S-adenosyl-L-methionine site; these read GE and SLH. The active-site S-methylcysteine intermediate is Cys-349.

It belongs to the radical SAM superfamily. RlmN family. [4Fe-4S] cluster serves as cofactor.

The protein resides in the cytoplasm. The enzyme catalyses adenosine(2503) in 23S rRNA + 2 reduced [2Fe-2S]-[ferredoxin] + 2 S-adenosyl-L-methionine = 2-methyladenosine(2503) in 23S rRNA + 5'-deoxyadenosine + L-methionine + 2 oxidized [2Fe-2S]-[ferredoxin] + S-adenosyl-L-homocysteine. The catalysed reaction is adenosine(37) in tRNA + 2 reduced [2Fe-2S]-[ferredoxin] + 2 S-adenosyl-L-methionine = 2-methyladenosine(37) in tRNA + 5'-deoxyadenosine + L-methionine + 2 oxidized [2Fe-2S]-[ferredoxin] + S-adenosyl-L-homocysteine. Its function is as follows. Specifically methylates position 2 of adenine 2503 in 23S rRNA and position 2 of adenine 37 in tRNAs. This chain is Probable dual-specificity RNA methyltransferase RlmN, found in Bacillus cereus (strain B4264).